The sequence spans 429 residues: MLPRLLLLICAPLCEPAELFLIASPSHPTEGSPVTLTCKMPFLQSSDAQFQFCFFRDTRALGPGWSSSPKLQIAAMWKEDTGSYWCEAQTMASKVLRSRRSQINVHRVPVADVSLETQPPGGQVMEGDRLVLICSVAMGTGDITFLWYKGAVGLNLQSKTQRSLTAEYEIPSVRESDAEQYYCVAENGYGPSPSGLVSITVRIPVSRPILMLRAPRAQAAVEDVLELHCEALRGSPPILYWFYHEDITLGSRSAPSGGGASFNLSLTEEHSGNYSCEANNGLGAQRSEAVTLNFTVPTGARSNHLTSGVIEGLLSTLGPATVALLFCYGLKRKIGRRSARDPLRSLPSPLPQEFTYLNSPTPGQLQPIYENVNVVSGDEVYSLAYYNQPEQESVAAETLGTHMEDKVSLDIYSRLRKANITDVDYEDAM.

A signal peptide spans 1 to 16 (MLPRLLLLICAPLCEP). Ig-like C2-type domains follow at residues 17-104 (AELF…SQIN), 109-200 (PVAD…VSIT), and 208-291 (PILM…EAVT). At 17-307 (AELFLIASPS…TGARSNHLTS (291 aa)) the chain is on the extracellular side. 3 disulfide bridges follow: Cys-38–Cys-86, Cys-134–Cys-183, and Cys-229–Cys-276. A glycan (N-linked (GlcNAc...) asparagine) is linked at Asn-293. Residues 308-328 (GVIEGLLSTLGPATVALLFCY) form a helical membrane-spanning segment. Residues 329–429 (GLKRKIGRRS…ITDVDYEDAM (101 aa)) lie on the Cytoplasmic side of the membrane. 5 short sequence motifs (ITIM motif) span residues 354-359 (FTYLNS), 367-372 (PIYENV), 379-384 (EVYSLA), 410-415 (DIYSRL), and 423-428 (VDYEDA).

In terms of assembly, interacts with ABL1. Interacts with GRB2 and SOS1. Interacts with SHIP-1/INPP5D. In terms of processing, phosphorylated on tyrosines upon activation. In terms of tissue distribution, primarily expressed in secondary lymphoid tissues by mature subsets of B-cells. Detected in spleen, lymph node, heart, skeletal muscle, kidney, liver and placenta. Specifically expressed by mature B lineage cells with higher expression in naive versus memory B-cells (at protein level).

Its subcellular location is the cell membrane. Functionally, type I transmembrane surface glycoprotein preferentially expressed by B-cells that regulates BCR-mediated signaling responses. Recruits ABL1 as the intracellular effector molecule to enhance B-cell activation. Also plays a negative role by suppressing ERK activation under homeostatic and BCR-stimulated conditions in a GRB2-dependent manner. The protein is Fc receptor-like protein 1 (FCRL1) of Homo sapiens (Human).